A 701-amino-acid polypeptide reads, in one-letter code: DNA ligase (701 aa).

NAD(+) contacts are provided by residues 50 to 54, 99 to 100, and Glu-130; these read DYEYD and SL. Lys-132 acts as the N6-AMP-lysine intermediate in catalysis. NAD(+) is bound by residues Arg-153, Glu-187, Lys-301, and Lys-325. Zn(2+) is bound by residues Cys-419, Cys-422, Cys-437, and Cys-442. Positions 626–701 constitute a BRCT domain; it reads NEHQKYMNKT…EIITEPFWDN (76 aa).

Belongs to the NAD-dependent DNA ligase family. LigA subfamily. Requires Mg(2+) as cofactor. The cofactor is Mn(2+).

It catalyses the reaction NAD(+) + (deoxyribonucleotide)n-3'-hydroxyl + 5'-phospho-(deoxyribonucleotide)m = (deoxyribonucleotide)n+m + AMP + beta-nicotinamide D-nucleotide.. Its function is as follows. DNA ligase that catalyzes the formation of phosphodiester linkages between 5'-phosphoryl and 3'-hydroxyl groups in double-stranded DNA using NAD as a coenzyme and as the energy source for the reaction. It is essential for DNA replication and repair of damaged DNA. This Malacoplasma penetrans (strain HF-2) (Mycoplasma penetrans) protein is DNA ligase.